Here is a 1413-residue protein sequence, read N- to C-terminus: DNA-directed RNA polymerase subunit beta' (1413 aa).

Cys-72, Cys-74, Cys-87, and Cys-90 together coordinate Zn(2+). 3 residues coordinate Mg(2+): Asp-463, Asp-465, and Asp-467. Positions 811, 885, 892, and 895 each coordinate Zn(2+).

It belongs to the RNA polymerase beta' chain family. The RNAP catalytic core consists of 2 alpha, 1 beta, 1 beta' and 1 omega subunit. When a sigma factor is associated with the core the holoenzyme is formed, which can initiate transcription. The cofactor is Mg(2+). Zn(2+) is required as a cofactor.

It catalyses the reaction RNA(n) + a ribonucleoside 5'-triphosphate = RNA(n+1) + diphosphate. Functionally, DNA-dependent RNA polymerase catalyzes the transcription of DNA into RNA using the four ribonucleoside triphosphates as substrates. The chain is DNA-directed RNA polymerase subunit beta' from Ruegeria pomeroyi (strain ATCC 700808 / DSM 15171 / DSS-3) (Silicibacter pomeroyi).